Here is a 508-residue protein sequence, read N- to C-terminus: Lysine-specific permease LysP (508 aa).

The next 12 membrane-spanning stretches (helical) occupy residues 43–63 (SMIA…GDVI), 66–86 (AGPF…YFLM), 112–132 (PAFG…TVAV), 144–164 (WLPD…VFSI), 184–204 (ITVV…IMGG), 219–239 (FVGG…LLVA), 270–290 (IFWR…AIIP), 314–334 (VGFS…VVSA), 367–387 (IPFI…LTSI), 393–413 (FTLL…GIAI), 436–456 (AKLF…VTLG), and 467–487 (WVQG…YLGY).

Belongs to the amino acid-polyamine-organocation (APC) superfamily. Amino acid transporter (AAT) (TC 2.A.3.1) family.

Its subcellular location is the cell membrane. The enzyme catalyses L-lysine(out) + H(+)(out) = L-lysine(in) + H(+)(in). Permease involved in lysine uptake. The chain is Lysine-specific permease LysP from Lactococcus lactis subsp. cremoris (strain MG1363).